A 184-amino-acid polypeptide reads, in one-letter code: ATP-dependent protease subunit HslV (184 aa).

Threonine 12 is a catalytic residue. The Na(+) site is built by alanine 166, cysteine 169, and threonine 172.

It belongs to the peptidase T1B family. HslV subfamily. In terms of assembly, a double ring-shaped homohexamer of HslV is capped on each side by a ring-shaped HslU homohexamer. The assembly of the HslU/HslV complex is dependent on binding of ATP.

The protein localises to the cytoplasm. It catalyses the reaction ATP-dependent cleavage of peptide bonds with broad specificity.. With respect to regulation, allosterically activated by HslU binding. In terms of biological role, protease subunit of a proteasome-like degradation complex believed to be a general protein degrading machinery. The sequence is that of ATP-dependent protease subunit HslV from Brucella abortus (strain S19).